The chain runs to 807 residues: Serine/threonine-protein kinase AfsK (807 aa).

One can recognise a Protein kinase domain in the interval 16–272; sequence FEVLGRLGAG…QAQLAPHLFA (257 aa). ATP-binding positions include 22-30 and lysine 44; that span reads LGAGGMGLV. At serine 71 the chain carries Phosphoserine; by autocatalysis. Aspartate 138 acts as the Proton acceptor in catalysis. Threonine 168 carries the post-translational modification Phosphothreonine; by autocatalysis. Disordered regions lie at residues 292 to 328 and 353 to 429; these read MIERRRGGRRTARRPPRPRPRRLRAAPQGPGAGHRLA and AGPS…PSPA. Residues 297–315 show a composition bias toward basic residues; that stretch reads RGGRRTARRPPRPRPRRLR. Residues 353-363 show a composition bias toward low complexity; sequence AGPSAAPDGGP.

This sequence belongs to the protein kinase superfamily. Ser/Thr protein kinase family. In terms of assembly, interacts (via the N-terminal kinase domain) with KbpA; the interaction prevents autophosphorylation of AfsK. Autophosphorylated mainly on threonine residues. Some phosphorylation on serine residues. Autophosphorylation on Thr-168 is the major site enhancing kinase activity towards AfsR, and is regulated though interaction with KbpA.

The enzyme catalyses L-seryl-[protein] + ATP = O-phospho-L-seryl-[protein] + ADP + H(+). The catalysed reaction is L-threonyl-[protein] + ATP = O-phospho-L-threonyl-[protein] + ADP + H(+). Its function is as follows. Component of the AfsK/AfsR system involved in the response of aerial mycelium formation to glucose. The chain is Serine/threonine-protein kinase AfsK (afsK) from Streptomyces griseus.